A 635-amino-acid chain; its full sequence is Early transcription factor 70 kDa subunit (635 aa).

One can recognise a Helicase ATP-binding domain in the interval R32–E185. Position 45–52 (H45–T52) interacts with ATP. Positions D135–H138 match the DEXH box motif. The Helicase C-terminal domain maps to K326–L505.

Belongs to the helicase family. VETF subfamily. In terms of assembly, heterodimer of a 70 kDa and a 82 kDa subunit. Part of the early transcription complex composed of ETF, RAP94, and the DNA-directed RNA polymerase.

It localises to the virion. Its function is as follows. Acts with RNA polymerase to initiate transcription from early gene promoters. Is recruited by the RPO-associated protein of 94 kDa (RAP94) to form the early transcription complex, which also contains the core RNA polymerase. ETF heterodimer binds to early gene promoters. The protein is Early transcription factor 70 kDa subunit (VETFS) of Oryctolagus cuniculus (Rabbit).